Here is a 190-residue protein sequence, read N- to C-terminus: uncharacterized protein (190 aa).

The protein to E.coli YdjR.

This is an uncharacterized protein from Pseudomonas putida (Arthrobacter siderocapsulatus).